The primary structure comprises 248 residues: ATP synthase subunit a (248 aa).

6 helical membrane-spanning segments follow: residues T34–G54, Y91–I111, I121–V141, F147–I167, F197–I217, and L220–L240.

This sequence belongs to the ATPase A chain family. In terms of assembly, F-type ATPases have 2 components, CF(1) - the catalytic core - and CF(0) - the membrane proton channel. CF(1) has five subunits: alpha(3), beta(3), gamma(1), delta(1), epsilon(1). CF(0) has four main subunits: a, b, b' and c.

Its subcellular location is the cell inner membrane. Key component of the proton channel; it plays a direct role in the translocation of protons across the membrane. This Dinoroseobacter shibae (strain DSM 16493 / NCIMB 14021 / DFL 12) protein is ATP synthase subunit a.